Consider the following 125-residue polypeptide: Testis-specific protein LINC02914 (125 aa).

The segment covering 1–12 has biased composition (basic and acidic residues); that stretch reads MHRKEPGARLEA. The interval 1–45 is disordered; the sequence is MHRKEPGARLEATRGAARPHKQGTKPMITRPSVSQLGEGKCPSSQ.

In terms of tissue distribution, expressed in testes and ejaculated spermatozoa (at protein level).

It is found in the cytoplasm. It localises to the nucleus. The protein localises to the cell projection. Its subcellular location is the cilium. The protein resides in the flagellum. In terms of biological role, may play a role in the flagellum biology. The protein is Testis-specific protein LINC02914 of Homo sapiens (Human).